We begin with the raw amino-acid sequence, 124 residues long: Protein MGF 110-8L (124 aa).

Residues 1-16 form the signal peptide; the sequence is MKVLILVLLGVVILQA. Residues Asn-76 and Asn-94 are each glycosylated (N-linked (GlcNAc...) asparagine; by host).

Belongs to the asfivirus MGF 110 family.

In terms of biological role, plays a role in virus cell tropism, and may be required for efficient virus replication in macrophages. The polypeptide is Protein MGF 110-8L (Ornithodoros (relapsing fever ticks)).